A 64-amino-acid polypeptide reads, in one-letter code: Cytochrome c oxidase subunit 9, mitochondrial (64 aa).

At 1-15 (MAATAVRPITGMLRR) the chain is on the mitochondrial matrix side. A helical membrane pass occupies residues 16 to 36 (GLILDIGIALGVGFVMANGYW). The Mitochondrial intermembrane segment spans residues 37 to 64 (YGYHMPRTNARDNYYKKLEEERAARMGA).

The protein belongs to the fungal cytochrome c oxidase subunit 7a family. As to quaternary structure, component of the cytochrome c oxidase (complex IV, CIV), a multisubunit enzyme composed of 11 subunits. The complex is composed of a catalytic core of 3 subunits Cox1, Cox2 and Cox3, encoded in the mitochondrial DNA, and 8 supernumerary subunits Cox4, Cox5a/Cox5, Cox6, Cox7, Cox8, Cox7a/Cox9, Cox6b/Cox12 and Cox6a/Cox13, which are encoded in the nuclear genome. The complex exists as a monomer or a dimer and forms respiratory supercomplexes (SCs) in the inner mitochondrial membrane with NADH-ubiquinone oxidoreductase (complex I, CI) and ubiquinol-cytochrome c oxidoreductase (cytochrome b-c1 complex, complex III, CIII), resulting in various different assemblies (supercomplexes I(1)IV(1), I(1)III(3)IV(2), III(2)IV(1) and III(2)IV(2) as well as larger supercomplexes of compositions like I(1)III(2)IV(5-6)).

It is found in the mitochondrion inner membrane. Its pathway is energy metabolism; oxidative phosphorylation. Its function is as follows. Component of the cytochrome c oxidase, the last enzyme in the mitochondrial electron transport chain which drives oxidative phosphorylation. The respiratory chain contains 3 multisubunit complexes succinate dehydrogenase (complex II, CII), ubiquinol-cytochrome c oxidoreductase (cytochrome b-c1 complex, complex III, CIII) and cytochrome c oxidase (complex IV, CIV), that cooperate to transfer electrons derived from NADH and succinate to molecular oxygen, creating an electrochemical gradient over the inner membrane that drives transmembrane transport and the ATP synthase. Cytochrome c oxidase is the component of the respiratory chain that catalyzes the reduction of oxygen to water. Electrons originating from reduced cytochrome c in the intermembrane space (IMS) are transferred via the dinuclear copper A center (CU(A)) of Cox2 and heme A of Cox1 to the active site in Cox1, a binuclear center (BNC) formed by heme A3 and copper B (CU(B)). The BNC reduces molecular oxygen to 2 water molecules using 4 electrons from cytochrome c in the IMS and 4 protons from the mitochondrial matrix. This is Cytochrome c oxidase subunit 9, mitochondrial (cox-17) from Neurospora crassa (strain ATCC 24698 / 74-OR23-1A / CBS 708.71 / DSM 1257 / FGSC 987).